The primary structure comprises 491 residues: Trigger factor (491 aa).

One can recognise a PPIase FKBP-type domain in the interval 169-254 (GDRVTIDYLG…VKDVAAAAPI (86 aa)). The tract at residues 434–491 (KVSKEELTAEDDADEKPAKKTASKKKAAAKADAAEGEEAAAPKRKAPAKKKASDESAE) is disordered. Basic residues predominate over residues 452–461 (KKTASKKKAA).

Belongs to the FKBP-type PPIase family. Tig subfamily.

It is found in the cytoplasm. It carries out the reaction [protein]-peptidylproline (omega=180) = [protein]-peptidylproline (omega=0). Functionally, involved in protein export. Acts as a chaperone by maintaining the newly synthesized protein in an open conformation. Functions as a peptidyl-prolyl cis-trans isomerase. The sequence is that of Trigger factor from Sinorhizobium medicae (strain WSM419) (Ensifer medicae).